Reading from the N-terminus, the 966-residue chain is C4 phosphoenolpyruvate carboxylase (966 aa).

S11 is modified (phosphoserine). Residue H172 is part of the active site. Residues W283, R450, and D597 each contribute to the D-glucose 6-phosphate site. K600 is an active-site residue. Residue R635 coordinates D-glucose 6-phosphate. R641 is an active-site residue. R641 contacts L-aspartate. D-glucose 6-phosphate is bound at residue T665. Q673 serves as a coordination point for L-aspartate. D-glucose 6-phosphate contacts are provided by residues R753 and 767 to 769; that span reads RAI. Residues K829, R888, and N964 each contribute to the L-aspartate site.

This sequence belongs to the PEPCase type 1 family. As to quaternary structure, homotetramer. Requires Mg(2+) as cofactor. As to expression, expressed in mesophyll cells, but not in bundle-sheath, roots, stems and flowers.

The protein localises to the cytoplasm. It carries out the reaction oxaloacetate + phosphate = phosphoenolpyruvate + hydrogencarbonate. Its pathway is photosynthesis; C4 acid pathway. 5 fold activation by the allosteric regulator glucose-6-phosphate. Low sensitivity to inhibition by L-malate and L-aspartate. Up-regulated by light-reversible phosphorylation. Its function is as follows. Forms oxaloacetate through the carboxylation of phosphoenolpyruvate (PEP). Catalyzes the first step of C4 photosynthesis. The sequence is that of C4 phosphoenolpyruvate carboxylase from Flaveria trinervia (Clustered yellowtops).